Reading from the N-terminus, the 72-residue chain is Cell division protein ZapB (72 aa).

The stretch at 1 to 71 (MSLEILDQLE…IRSLLGKFDN (71 aa)) forms a coiled coil.

The protein belongs to the ZapB family. In terms of assembly, homodimer. The ends of the coiled-coil dimer bind to each other, forming polymers. Interacts with FtsZ.

It localises to the cytoplasm. Non-essential, abundant cell division factor that is required for proper Z-ring formation. It is recruited early to the divisome by direct interaction with FtsZ, stimulating Z-ring assembly and thereby promoting cell division earlier in the cell cycle. Its recruitment to the Z-ring requires functional FtsA or ZipA. In Haemophilus influenzae (strain 86-028NP), this protein is Cell division protein ZapB.